The primary structure comprises 515 residues: Pisatin demethylase (515 aa).

A heme-binding site is contributed by cysteine 453.

Belongs to the cytochrome P450 family. It depends on heme as a cofactor.

In terms of biological role, can detoxify the phytoalexin pisatin from garden pea. Pisatin is an antimicrobial compound produced by pea in response to infection by plant pathogens. The protein is Pisatin demethylase (PDAT9) of Fusarium vanettenii (Neocosmospora pisi).